The primary structure comprises 454 residues: GTPase Obg (454 aa).

Residues 2–159 enclose the Obg domain; the sequence is SDFVDEAVLH…VDIRLELKTI (158 aa). The disordered stretch occupies residues 60 to 87; that stretch reads YQRRPHRKAENGAPGQGSNRSGASGADL. Residues 160–335 enclose the OBG-type G domain; the sequence is ADVGLVGFPS…LAYALGEQVA (176 aa). Residues 166–173, 191–195, 212–215, 287–290, and 316–318 each bind GTP; these read GFPSAGKS, FTTLV, DVPG, NKID, and SAA. Positions 173 and 193 each coordinate Mg(2+). An OCT domain is found at 353 to 435; the sequence is PREIGEIPFQ…DNPVVFDWDP (83 aa).

This sequence belongs to the TRAFAC class OBG-HflX-like GTPase superfamily. OBG GTPase family. In terms of assembly, monomer. Mg(2+) is required as a cofactor.

Its subcellular location is the cytoplasm. Its function is as follows. An essential GTPase which binds GTP, GDP and possibly (p)ppGpp with moderate affinity, with high nucleotide exchange rates and a fairly low GTP hydrolysis rate. Plays a role in control of the cell cycle, stress response, ribosome biogenesis and in those bacteria that undergo differentiation, in morphogenesis control. The polypeptide is GTPase Obg (Thermobifida fusca (strain YX)).